Reading from the N-terminus, the 512-residue chain is GMP synthase [glutamine-hydrolyzing] (512 aa).

One can recognise a Glutamine amidotransferase type-1 domain in the interval 7 to 197; the sequence is TIIVLDFGSQ…VFGVCGCSEG (191 aa). The active-site Nucleophile is C84. Catalysis depends on residues H171 and E173. A GMPS ATP-PPase domain is found at 198 to 387; sequence WNMENFIEVE…LGIPDEIVWR (190 aa). ATP is bound at residue 225 to 231; the sequence is SGGVDSS.

Homodimer.

It catalyses the reaction XMP + L-glutamine + ATP + H2O = GMP + L-glutamate + AMP + diphosphate + 2 H(+). Its pathway is purine metabolism; GMP biosynthesis; GMP from XMP (L-Gln route): step 1/1. Catalyzes the synthesis of GMP from XMP. This chain is GMP synthase [glutamine-hydrolyzing], found in Bacillus mycoides (strain KBAB4) (Bacillus weihenstephanensis).